The primary structure comprises 382 residues: Nonsense-mediated mRNA decay factor SMG9 (382 aa).

Residues M1–G66 are disordered.

The protein belongs to the SMG9 family.

In terms of biological role, involved in nonsense-mediated decay (NMD) of mRNAs containing premature stop codons. Probable component of kinase complex containing smg-1 and recruited to stalled ribosomes. The protein is Nonsense-mediated mRNA decay factor SMG9 (smg-9) of Caenorhabditis briggsae.